The sequence spans 169 residues: ATP synthase subunit b (169 aa).

A helical membrane pass occupies residues Lys-11–Leu-31.

The protein belongs to the ATPase B chain family. In terms of assembly, F-type ATPases have 2 components, F(1) - the catalytic core - and F(0) - the membrane proton channel. F(1) has five subunits: alpha(3), beta(3), gamma(1), delta(1), epsilon(1). F(0) has three main subunits: a(1), b(2) and c(10-14). The alpha and beta chains form an alternating ring which encloses part of the gamma chain. F(1) is attached to F(0) by a central stalk formed by the gamma and epsilon chains, while a peripheral stalk is formed by the delta and b chains.

The protein resides in the cell membrane. Its function is as follows. F(1)F(0) ATP synthase produces ATP from ADP in the presence of a proton or sodium gradient. F-type ATPases consist of two structural domains, F(1) containing the extramembraneous catalytic core and F(0) containing the membrane proton channel, linked together by a central stalk and a peripheral stalk. During catalysis, ATP synthesis in the catalytic domain of F(1) is coupled via a rotary mechanism of the central stalk subunits to proton translocation. Functionally, component of the F(0) channel, it forms part of the peripheral stalk, linking F(1) to F(0). This chain is ATP synthase subunit b, found in Leuconostoc citreum (strain KM20).